A 255-amino-acid polypeptide reads, in one-letter code: MSGSKCCSSSNTIKVSIYLFLHTLTYGLLNYHLNPRLLASTGVVESDIPYWMSYLSIIMHVGQSLLLQKFNLGYGWLLLTKYPVYVLLSTYYLTPLSQIAWAFIIDAISLLVARCFSRANPIKCSNQVNTQYSVSFLFTIMASVLISVLNYISQKIFLNGLILGNSHNVVTSLVAPPLPLQYLAHVPIGYVIQRVVFSERPIPQSLFLMIFLTLWNCFIPYSILFSMNWSAMFQVVGAYLSQIWIITFICWALSL.

8 helical membrane-spanning segments follow: residues 13-33, 48-68, 72-94, 99-116, 132-152, 172-192, 205-225, and 235-255; these read IKVSIYLFLHTLTYGLLNYHL, IPYWMSYLSIIMHVGQSLLLQ, LGYGWLLLTKYPVYVLLSTYYLT, IAWAFIIDAISLLVARCF, YSVSFLFTIMASVLISVLNYI, SLVAPPLPLQYLAHVPIGYVI, SLFLMIFLTLWNCFIPYSILF, and VVGAYLSQIWIITFICWALSL.

Its subcellular location is the endoplasmic reticulum membrane. It localises to the nucleus inner membrane. Its function is as follows. Connects telomeres to the nuclear envelop (NE) during both vegetative growth and meiosis. This connection ensures clustering of telomeres to the spindle pole body (SPB) when cells enter meiotic prophase. This chain is Bouquet formation protein 3 (bqt3), found in Schizosaccharomyces pombe (strain 972 / ATCC 24843) (Fission yeast).